Reading from the N-terminus, the 440-residue chain is Tetratricopeptide repeat protein 5 (440 aa).

TPR repeat units lie at residues 7–61, 68–98, 103–130, 136–174, and 179–216; these read EEVK…EEVV, AQVL…AVKL, VEAW…SGAL, KVSL…AVQM, and GRSW…AEKV. Positions 13–24 match the Nuclear export signal motif; that stretch reads LQKLQELVDQLY. A Phosphoserine; by ATM modification is found at Ser-203. Ser-221 is subject to Phosphoserine; by CHEK2. The stretch at 224-253 is one TPR 6 repeat; sequence PDLHLNRATLHKYEESYGEALEGFSRAAAL. The mediates interaction with 28S rRNA of ribosome-coding tubulin stretch occupies residues 285–287; the sequence is KTK.

In terms of assembly, interacts with JMY and p300/EP300; the interaction occurs in the nucleus and augments the association between JMY and p300/EP300 in response to DNA damage. Forms a complex with HSF1 and p300/EP300; these interactions augment chromatin-bound HSF1 and p300/EP300 histone acetyltransferase activity, resulting in enhanced heat-shock-responsive transcription. Interacts with PRMT5; the interaction is DNA damage-dependent and promotes PRMT5 interaction with p53/TP53 and subsequent methylation. Interacts with JMY; the interaction occurs in the cytoplasm and results in the inhibition of JYM's nucleation activity. Interacts with ribosome-coding tubulin (via 60S subunit 28S rRNA and protein uL24/RPL26) and the N-terminal of nascent tubulin polypeptide (via alpha-tubulin MREC motif and beta-tubulin MREI motif); these interactions result in tubulin mRNA-targeted degradation. Interacts with ATP5F1B; the interaction occurs in the mitochondria and results in ATP production decrease. Interacts with p53/TP53; the interaction occurs in the mitochondria and results in increased apoptosis. In terms of processing, phosphorylation by ATM kinase induces nuclear accumulation while interfering with nuclear export, and phosphorylation by CHEK2 kinase enhances nuclear stability.

The protein localises to the nucleus. The protein resides in the cytoplasm. It is found in the cytoplasmic vesicle. It localises to the mitochondrion matrix. In terms of biological role, cofactor involved in the regulation of various cellular mechanisms such as actin regulation, autophagy, chromatin regulation and DNA repair. In non-stress conditions, interacts with cofactor JMY in the cytoplasm which prevents JMY's actin nucleation activity and ability to activate the Arp2/3 complex. Acts as a negative regulator of nutrient stress-induced autophagy by preventing JMY's interaction with MAP1LC3B, thereby preventing autophagosome formation. Involves in tubulin autoregulation by promoting its degradation in response to excess soluble tubulin. To do so, associates with the active ribosome near the ribosome exit tunnel and with nascent tubulin polypeptides early during their translation, triggering tubulin mRNA-targeted degradation. Following DNA damage, phosphorylated by DNA damage responsive protein kinases ATM and CHEK2, leading to its nuclear accumulation and stability. Nuclear TTC5/STRAP promotes the assembly of a stress-responsive p53/TP53 coactivator complex, which includes the coactivators JMY and p300, thereby increasing p53/TP53-dependent transcription and apoptosis. Also recruits arginine methyltransferase PRMT5 to p53/TP53 when DNA is damaged, allowing PRMT5 to methylate p53/TP53. In DNA stress conditions, also prevents p53/TP53 degradation by E3 ubiquitin ligase MDM2. Upon heat-shock stress, forms a chromatin-associated complex with heat-shock factor 1 HSF1 and p300/EP300 to stimulate heat-shock-responsive transcription, thereby increasing cell survival. Mitochondrial TTC5/STRAP interacts with ATP synthase subunit beta ATP5F1B which decreased ATP synthase activity and lowers mitochondrial ATP production, thereby regulating cellular respiration and mitochondrial-dependent apoptosis. Mitochondrial TTC5/STRAP also regulates p53/TP53-mediated apoptosis. In Homo sapiens (Human), this protein is Tetratricopeptide repeat protein 5.